The following is an 817-amino-acid chain: Lon protease 1 (817 aa).

The Lon N-terminal domain occupies 18-216 (VPLLPLRDII…KLYELMQGEI (199 aa)). Residue 368–375 (GPPGVGKT) participates in ATP binding. One can recognise a Lon proteolytic domain in the interval 604–785 (EDQVGIVTGL…DDVLREALVL (182 aa)). Active-site residues include Ser-691 and Lys-734. A disordered region spans residues 789–817 (EEFGRKPTTDGGKLGGTTELPASPAVAPA).

It belongs to the peptidase S16 family. Homohexamer. Organized in a ring with a central cavity.

The protein resides in the cytoplasm. The catalysed reaction is Hydrolysis of proteins in presence of ATP.. ATP-dependent serine protease that mediates the selective degradation of mutant and abnormal proteins as well as certain short-lived regulatory proteins. Required for cellular homeostasis and for survival from DNA damage and developmental changes induced by stress. Degrades polypeptides processively to yield small peptide fragments that are 5 to 10 amino acids long. Binds to DNA in a double-stranded, site-specific manner. The protein is Lon protease 1 of Myxococcus xanthus.